The primary structure comprises 106 residues: UPF0145 protein MA_3383 (106 aa).

It belongs to the UPF0145 family.

The chain is UPF0145 protein MA_3383 from Methanosarcina acetivorans (strain ATCC 35395 / DSM 2834 / JCM 12185 / C2A).